The following is a 326-amino-acid chain: Dehydrogenase/reductase SDR family protein 7-like (326 aa).

Topologically, residues 1–17 (MKVQDMDKCAPSSDWNV) are cytoplasmic. A helical; Signal-anchor for type II membrane protein membrane pass occupies residues 18–38 (LYWVLGTVLMPVALPLAIINI). The Peroxisomal segment spans residues 39–326 (WQRFQAQKFR…KLENAEKKST (288 aa)). Residue 57–81 (LITGASSGLGESLAHVFYRAGCRVI) coordinates NAD(+). Ser-193 contributes to the substrate binding site. Tyr-206 acts as the Proton acceptor in catalysis.

Belongs to the short-chain dehydrogenases/reductases (SDR) family.

The protein resides in the peroxisome membrane. Its function is as follows. Putative oxidoreductase. The chain is Dehydrogenase/reductase SDR family protein 7-like from Drosophila melanogaster (Fruit fly).